Here is a 215-residue protein sequence, read N- to C-terminus: Large ribosomal subunit protein uL3 (215 aa).

Residues Ser131–Asn144 show a composition bias toward low complexity. Positions Ser131–Gly150 are disordered. Gln153 bears the N5-methylglutamine mark.

Belongs to the universal ribosomal protein uL3 family. As to quaternary structure, part of the 50S ribosomal subunit. Forms a cluster with proteins L14 and L19. Methylated by PrmB.

One of the primary rRNA binding proteins, it binds directly near the 3'-end of the 23S rRNA, where it nucleates assembly of the 50S subunit. This is Large ribosomal subunit protein uL3 from Nitrosomonas europaea (strain ATCC 19718 / CIP 103999 / KCTC 2705 / NBRC 14298).